The primary structure comprises 465 residues: UDP-N-acetylmuramate--L-alanine ligase (465 aa).

G112–T118 contacts ATP.

The protein belongs to the MurCDEF family.

The protein resides in the cytoplasm. The catalysed reaction is UDP-N-acetyl-alpha-D-muramate + L-alanine + ATP = UDP-N-acetyl-alpha-D-muramoyl-L-alanine + ADP + phosphate + H(+). It participates in cell wall biogenesis; peptidoglycan biosynthesis. Cell wall formation. The sequence is that of UDP-N-acetylmuramate--L-alanine ligase from Burkholderia ambifaria (strain ATCC BAA-244 / DSM 16087 / CCUG 44356 / LMG 19182 / AMMD) (Burkholderia cepacia (strain AMMD)).